Here is a 208-residue protein sequence, read N- to C-terminus: MNRMFDLVLGTGNAKKLVELRMMLPEETIALTALSEIENAIDVVEDGETFSANAAKKATEQAKHLERWVLAEDSGLSVDALKGAPGVYSARYAGTHGDDEANNEKLLRELTDVPMDRRGAQFNCHLCLSDPDGNVRLAESGICRGRIATERSGGAGFGYDPLFVIPEYHKTFGELNLTVKRALSHRSRALRLFIPQLLRLVQSNSTSA.

11–16 contacts substrate; the sequence is TGNAKK. Asp73 functions as the Proton acceptor in the catalytic mechanism. Asp73 contacts Mg(2+). Residues Ser74, 157–160, Lys180, and 185–186 contribute to the substrate site; these read FGYD and HR.

The protein belongs to the HAM1 NTPase family. In terms of assembly, homodimer. Mg(2+) serves as cofactor.

It catalyses the reaction XTP + H2O = XMP + diphosphate + H(+). The catalysed reaction is dITP + H2O = dIMP + diphosphate + H(+). The enzyme catalyses ITP + H2O = IMP + diphosphate + H(+). In terms of biological role, pyrophosphatase that catalyzes the hydrolysis of nucleoside triphosphates to their monophosphate derivatives, with a high preference for the non-canonical purine nucleotides XTP (xanthosine triphosphate), dITP (deoxyinosine triphosphate) and ITP. Seems to function as a house-cleaning enzyme that removes non-canonical purine nucleotides from the nucleotide pool, thus preventing their incorporation into DNA/RNA and avoiding chromosomal lesions. This is dITP/XTP pyrophosphatase from Rhodopirellula baltica (strain DSM 10527 / NCIMB 13988 / SH1).